Here is a 45-residue protein sequence, read N- to C-terminus: MMKKIFFIFALSGILAACTVGGGVSAGGGSNGVGLGVGIGSGIRF.

A helical transmembrane segment spans residues 5–25 (IFFIFALSGILAACTVGGGVS).

It is found in the membrane. This is an uncharacterized protein from Haemophilus influenzae (strain ATCC 51907 / DSM 11121 / KW20 / Rd).